A 45-amino-acid polypeptide reads, in one-letter code: FKBP-type peptidyl-prolyl cis-trans isomerase, chloroplastic (45 aa).

The protein belongs to the FKBP-type PPIase family. As to expression, expressed in leaves, but not in roots.

Its subcellular location is the plastid. It is found in the chloroplast thylakoid lumen. The enzyme catalyses [protein]-peptidylproline (omega=180) = [protein]-peptidylproline (omega=0). Its function is as follows. PPIases accelerate the folding of proteins. It catalyzes the cis-trans isomerization of proline imidic peptide bonds in oligopeptides. The protein is FKBP-type peptidyl-prolyl cis-trans isomerase, chloroplastic of Vicia faba (Broad bean).